Here is a 301-residue protein sequence, read N- to C-terminus: Methionyl-tRNA formyltransferase (301 aa).

110 to 113 contacts (6S)-5,6,7,8-tetrahydrofolate; sequence SLLP.

The protein belongs to the Fmt family.

The enzyme catalyses L-methionyl-tRNA(fMet) + (6R)-10-formyltetrahydrofolate = N-formyl-L-methionyl-tRNA(fMet) + (6S)-5,6,7,8-tetrahydrofolate + H(+). Attaches a formyl group to the free amino group of methionyl-tRNA(fMet). The formyl group appears to play a dual role in the initiator identity of N-formylmethionyl-tRNA by promoting its recognition by IF2 and preventing the misappropriation of this tRNA by the elongation apparatus. The protein is Methionyl-tRNA formyltransferase of Acidiphilium cryptum (strain JF-5).